A 148-amino-acid polypeptide reads, in one-letter code: Ubiquitin-conjugating enzyme E2 30 (148 aa).

The region spanning 1–147 is the UBC core domain; sequence MASKRINKEL…AQSWTQKYAM (147 aa). The Glycyl thioester intermediate role is filled by Cys85.

Belongs to the ubiquitin-conjugating enzyme family. As to quaternary structure, interacts with RGLG3 and RGLG4. Ubiquitously expressed at very low levels.

It catalyses the reaction S-ubiquitinyl-[E1 ubiquitin-activating enzyme]-L-cysteine + [E2 ubiquitin-conjugating enzyme]-L-cysteine = [E1 ubiquitin-activating enzyme]-L-cysteine + S-ubiquitinyl-[E2 ubiquitin-conjugating enzyme]-L-cysteine.. It participates in protein modification; protein ubiquitination. Accepts the ubiquitin from the E1 complex and catalyzes its covalent attachment to other proteins. The protein is Ubiquitin-conjugating enzyme E2 30 (UBC30) of Arabidopsis thaliana (Mouse-ear cress).